Here is a 523-residue protein sequence, read N- to C-terminus: Apoptosis inhibitor 5 (523 aa).

The ARM-like and Heat-like helical repeats stretch occupies residues 1-360 (MPTVEELYRN…HQLGRKLPDF (360 aa)). A disordered region spans residues 446–523 (VQKADANQKR…RGNRSRGRIY (78 aa)). Positions 454-475 (KRTSEDTTSSSPPKKASAGPKR) match the Nuclear localization signal motif. Residues 460–471 (TTSSSPPKKASA) show a composition bias toward low complexity. Over residues 487–497 (KYSSNLGSFSY) the composition is skewed to polar residues. Positions 502–515 (GFRGGRGRGWGGRG) are enriched in gly residues.

It belongs to the API5 family. Monomer.

It is found in the nucleus. The protein localises to the cytoplasm. In terms of biological role, antiapoptotic factor that may have a role in protein assembly. This Gallus gallus (Chicken) protein is Apoptosis inhibitor 5 (API5).